We begin with the raw amino-acid sequence, 172 residues long: Hemagglutinin/amebocyte aggregation factor (172 aa).

Positions M1–A19 are cleaved as a signal peptide. Tandem repeats lie at residues V21–D25, E50–W54, V73–D77, and E102–W106. Cystine bridges form between C32/C58, C67/C172, C84/C110, C111/C117, and C123/C167. 2 repeat units span residues V129–D133 and E158–W162.

The protein belongs to the dermatopontin family.

Its subcellular location is the secreted. Functionally, possesses the property of inducing both aggregation of amebocytes and agglutination of erythrocytes. The chain is Hemagglutinin/amebocyte aggregation factor from Limulus polyphemus (Atlantic horseshoe crab).